The sequence spans 25 residues: Omega conotoxin-CVIF (25 aa).

3 disulfides stabilise this stretch: C1-C16, C8-C20, and C15-C25. A Cysteine amide modification is found at C25.

It belongs to the conotoxin O1 superfamily. In terms of tissue distribution, expressed by the venom duct.

Its subcellular location is the secreted. Functionally, omega-conotoxins act at presynaptic membranes, they bind and block voltage-gated calcium channels. This toxin blocks N-type calcium channels (Cav2.2/CACNA1B). It shows a higher potency when Cav2.2/CACNA1B is only expressed with the ancillary subunit CACNB3 (IC(50)=0.1 nM) than on Cav2.2/CACNA1B expressed with the ancillary subunits CACNA2D1 and CACNB3 (IC(50)=19.9 nM). The Cav2.2/CACNA1B block by this toxin is voltage-independent, whereas the recovery from toxin block is voltage-dependent. There is a low recovery at physiological membrane potential and a high recovery with hyperpolarized potential. This indicates that the toxin has a higher affinity for Cav2.2/CACNA1B in the inactivated state. It is noteworthy that ancillary subunits beta modulate recovery from this toxin block. Cav2.2/CACNA1B expressed with the ancillary subunit CACNB2a (isoform 2a) almost recover completely from this toxin block, whereas an expression with CACNB3 exhibits relatively weak recovery. Inhibition by this toxin of excitatory synaptic transmission is reversible. In vivo, when tested on rat model of persistent pain, this toxin blocks chronic pain behavior. This Conus catus (Cat cone) protein is Omega conotoxin-CVIF.